The following is a 344-amino-acid chain: Holliday junction branch migration complex subunit RuvB (344 aa).

The tract at residues 4–184 (QDRIIDANAK…FGIVQRLEFY (181 aa)) is large ATPase domain (RuvB-L). ATP-binding positions include Arg-24, Gly-65, Lys-68, Thr-69, Thr-70, 131–133 (EDF), Arg-174, Tyr-184, and Arg-221. Thr-69 lines the Mg(2+) pocket. A small ATPAse domain (RuvB-S) region spans residues 185 to 255 (NIEDLTHIVE…IADLALNMLN (71 aa)). A head domain (RuvB-H) region spans residues 258 to 344 (EHGFDHMDRR…ALKQDSLPGI (87 aa)). Residues Arg-294, Arg-313, and Arg-318 each coordinate DNA.

It belongs to the RuvB family. Homohexamer. Forms an RuvA(8)-RuvB(12)-Holliday junction (HJ) complex. HJ DNA is sandwiched between 2 RuvA tetramers; dsDNA enters through RuvA and exits via RuvB. An RuvB hexamer assembles on each DNA strand where it exits the tetramer. Each RuvB hexamer is contacted by two RuvA subunits (via domain III) on 2 adjacent RuvB subunits; this complex drives branch migration. In the full resolvosome a probable DNA-RuvA(4)-RuvB(12)-RuvC(2) complex forms which resolves the HJ.

The protein localises to the cytoplasm. It catalyses the reaction ATP + H2O = ADP + phosphate + H(+). Its function is as follows. The RuvA-RuvB-RuvC complex processes Holliday junction (HJ) DNA during genetic recombination and DNA repair, while the RuvA-RuvB complex plays an important role in the rescue of blocked DNA replication forks via replication fork reversal (RFR). RuvA specifically binds to HJ cruciform DNA, conferring on it an open structure. The RuvB hexamer acts as an ATP-dependent pump, pulling dsDNA into and through the RuvAB complex. RuvB forms 2 homohexamers on either side of HJ DNA bound by 1 or 2 RuvA tetramers; 4 subunits per hexamer contact DNA at a time. Coordinated motions by a converter formed by DNA-disengaged RuvB subunits stimulates ATP hydrolysis and nucleotide exchange. Immobilization of the converter enables RuvB to convert the ATP-contained energy into a lever motion, pulling 2 nucleotides of DNA out of the RuvA tetramer per ATP hydrolyzed, thus driving DNA branch migration. The RuvB motors rotate together with the DNA substrate, which together with the progressing nucleotide cycle form the mechanistic basis for DNA recombination by continuous HJ branch migration. Branch migration allows RuvC to scan DNA until it finds its consensus sequence, where it cleaves and resolves cruciform DNA. The polypeptide is Holliday junction branch migration complex subunit RuvB (Saccharophagus degradans (strain 2-40 / ATCC 43961 / DSM 17024)).